The primary structure comprises 617 residues: Tetratricopeptide repeat protein 39B (617 aa).

TPR repeat units lie at residues 328–361, 520–553, and 561–594; these read SLIL…QEEW, CLVK…EKLL, and PFTL…YKDY.

The protein belongs to the TTC39 family. In terms of tissue distribution, high expression in lung and spleen. Low lower expression in liver and small intestine. Weak expression in heart, brain, kidney, adipose, and adrenal gland.

Its function is as follows. Regulates high density lipoprotein (HDL) cholesterol metabolism by promoting the ubiquitination and degradation of the oxysterols receptors LXR (NR1H2 and NR1H3). The sequence is that of Tetratricopeptide repeat protein 39B from Mus musculus (Mouse).